The following is a 311-amino-acid chain: Deacetoxycephalosporin C synthase (311 aa).

The Fe2OG dioxygenase domain occupies 154–267; the sequence is DCEPLLRFRY…RTSSVFFLRP (114 aa).

Belongs to the iron/ascorbate-dependent oxidoreductase family. It depends on Fe cation as a cofactor. Requires L-ascorbate as cofactor.

It catalyses the reaction penicillin N + 2-oxoglutarate + O2 = deacetoxycephalosporin C + succinate + CO2 + H2O. It functions in the pathway antibiotic biosynthesis; cephalosporin C biosynthesis. Its function is as follows. Catalyzes the step from penicillin N to deacetoxy-cephalosporin C. In Streptomyces clavuligerus, this protein is Deacetoxycephalosporin C synthase (cefE).